The primary structure comprises 237 residues: Ribonuclease PH (237 aa).

Phosphate-binding positions include R86 and G124 to R126.

This sequence belongs to the RNase PH family. In terms of assembly, homohexameric ring arranged as a trimer of dimers.

The catalysed reaction is tRNA(n+1) + phosphate = tRNA(n) + a ribonucleoside 5'-diphosphate. Phosphorolytic 3'-5' exoribonuclease that plays an important role in tRNA 3'-end maturation. Removes nucleotide residues following the 3'-CCA terminus of tRNAs; can also add nucleotides to the ends of RNA molecules by using nucleoside diphosphates as substrates, but this may not be physiologically important. Probably plays a role in initiation of 16S rRNA degradation (leading to ribosome degradation) during starvation. This Shewanella sp. (strain W3-18-1) protein is Ribonuclease PH.